The primary structure comprises 134 residues: ATP synthase epsilon chain (134 aa).

It belongs to the ATPase epsilon chain family. F-type ATPases have 2 components, CF(1) - the catalytic core - and CF(0) - the membrane proton channel. CF(1) has five subunits: alpha(3), beta(3), gamma(1), delta(1), epsilon(1). CF(0) has three main subunits: a, b and c.

It is found in the cell inner membrane. Produces ATP from ADP in the presence of a proton gradient across the membrane. The protein is ATP synthase epsilon chain of Syntrophobacter fumaroxidans (strain DSM 10017 / MPOB).